Consider the following 291-residue polypeptide: N-acetylmannosamine kinase (291 aa).

ATP is bound by residues 5 to 12 (AIDIGGTK) and 132 to 139 (GVGGGVVS). Zn(2+) is bound by residues His-156, Cys-166, Cys-168, and Cys-173.

Belongs to the ROK (NagC/XylR) family. NanK subfamily. As to quaternary structure, homodimer.

The enzyme catalyses an N-acyl-D-mannosamine + ATP = an N-acyl-D-mannosamine 6-phosphate + ADP + H(+). It functions in the pathway amino-sugar metabolism; N-acetylneuraminate degradation; D-fructose 6-phosphate from N-acetylneuraminate: step 2/5. In terms of biological role, catalyzes the phosphorylation of N-acetylmannosamine (ManNAc) to ManNAc-6-P. In Escherichia coli (strain SMS-3-5 / SECEC), this protein is N-acetylmannosamine kinase.